The primary structure comprises 1055 residues: RapA guanosine triphosphatase-activating protein 1 (1055 aa).

Disordered stretches follow at residues Leu-76 to Arg-100, Asn-256 to Thr-292, Gln-418 to Val-525, Thr-544 to Leu-570, Thr-603 to Glu-629, and Asn-943 to Thr-969. The segment covering Gln-89–Arg-100 has biased composition (basic and acidic residues). Low complexity-rich tracts occupy residues Ser-262–Thr-292, Asp-442–Asn-455, and Thr-469–Asn-482. Positions Ile-483–Pro-494 are enriched in polar residues. Composition is skewed to low complexity over residues Thr-603–Pro-622 and Asn-943–Asn-966. The Rap-GAP domain maps to Leu-779 to Phe-1048.

It is found in the cytoplasm. The protein resides in the cell cortex. Functionally, mediates the deactivation of rap1 and plays an important role in spatially and temporally regulating cell adhesion and chemotaxis by controlling attachment disassembly in the leading edge through the regulation of myosin II assembly and disassembly. Overexpression leads to defective chemotaxis. This Dictyostelium discoideum (Social amoeba) protein is RapA guanosine triphosphatase-activating protein 1 (rapgap1).